Here is a 180-residue protein sequence, read N- to C-terminus: Probable RNA 2'-phosphotransferase (180 aa).

The protein belongs to the KptA/TPT1 family.

In terms of biological role, removes the 2'-phosphate from RNA via an intermediate in which the phosphate is ADP-ribosylated by NAD followed by a presumed transesterification to release the RNA and generate ADP-ribose 1''-2''-cyclic phosphate (APPR&gt;P). May function as an ADP-ribosylase. The sequence is that of Probable RNA 2'-phosphotransferase from Pectobacterium atrosepticum (strain SCRI 1043 / ATCC BAA-672) (Erwinia carotovora subsp. atroseptica).